The chain runs to 119 residues: Large ribosomal subunit protein bL17 (119 aa).

This sequence belongs to the bacterial ribosomal protein bL17 family. As to quaternary structure, part of the 50S ribosomal subunit. Contacts protein L32.

This Mesoplasma florum (strain ATCC 33453 / NBRC 100688 / NCTC 11704 / L1) (Acholeplasma florum) protein is Large ribosomal subunit protein bL17.